Reading from the N-terminus, the 86-residue chain is Sugar transporter SemiSWEET (86 aa).

The next 3 membrane-spanning stretches (helical) occupy residues 3-23 (PFLIKLIGFAAATCTTVAYAP), 37-57 (ISLGMFLVMVLGLALWLIYGL), and 61-81 (DAPLIASNAVTMLLAGGILVM). Positions 6–63 (IKLIGFAAATCTTVAYAPQFIKVLKTRSARDISLGMFLVMVLGLALWLIYGLLSGDAP) constitute a PQ-loop domain.

In terms of assembly, homodimer. Homooligomer.

The protein resides in the cell membrane. Its function is as follows. Mediates sucrose transmembrane transport down a concentration gradient. This chain is Sugar transporter SemiSWEET, found in Bradyrhizobium diazoefficiens (strain JCM 10833 / BCRC 13528 / IAM 13628 / NBRC 14792 / USDA 110).